The primary structure comprises 107 residues: U1-lycotoxin-Ls1b (107 aa).

A signal peptide spans 1 to 20; sequence MMKVLVVVALLPTLISYSSS. The propeptide occupies 21–41; it reads EGIDDLEADELLSLMANEQTR. Intrachain disulfides connect cysteine 44–cysteine 59, cysteine 51–cysteine 68, cysteine 58–cysteine 86, and cysteine 70–cysteine 84.

This sequence belongs to the neurotoxin 19 (CSTX) family. 04 (U1-Lctx) subfamily. In terms of tissue distribution, expressed by the venom gland.

The protein localises to the secreted. This is U1-lycotoxin-Ls1b from Lycosa singoriensis (Wolf spider).